We begin with the raw amino-acid sequence, 253 residues long: Tetraspanin-3 (253 aa).

Over 1 to 11 (MGQCGITSSKT) the chain is Cytoplasmic. Residues 12–32 (VLVFLNLIFWGAAGILCYVGA) traverse the membrane as a helical segment. Residues 33-50 (YVFITYDDYDHFFEDVYT) are Extracellular-facing. The chain crosses the membrane as a helical span at residues 51-71 (LIPAVVIIAVGALLFIIGLIG). Residues 72–85 (CCATIRESRCGLAT) are Cytoplasmic-facing. Residues 86–106 (FVIILLLVFVTEVVVVVLGYV) form a helical membrane-spanning segment. Topologically, residues 107–212 (YRAKVENEVD…KKLQEIMMHV (106 aa)) are extracellular. N-linked (GlcNAc...) asparagine glycosylation is found at Asn127, Asn152, Asn167, and Asn183. The chain crosses the membrane as a helical span at residues 213 to 233 (IWAALAFAAIQLLGMLCACIV). Residues 234–253 (LCRRSRDPAYELLITGGTYA) are Cytoplasmic-facing.

The protein belongs to the tetraspanin (TM4SF) family. Interacts with claudin-11/CLDN11 and integrins.

It is found in the membrane. In terms of biological role, regulates the proliferation and migration of oligodendrocytes, a process essential for normal myelination and repair. The sequence is that of Tetraspanin-3 (TSPAN3) from Homo sapiens (Human).